The following is a 621-amino-acid chain: DEAD-box ATP-dependent RNA helicase 39 (621 aa).

The Q motif signature appears at 112–140 (ENFQELGLSEEVMGALQELNIEVPTEIQC). Residues 143-330 (IPAVMERKSV…DEEFQGIEHL (188 aa)) enclose the Helicase ATP-binding domain. 156-163 (SHTGSGKT) is a binding site for ATP. Positions 270-273 (DEAD) match the DEAD box motif. The 151-residue stretch at 355-505 (KLEALLQVLE…LESLTTDNVR (151 aa)) folds into the Helicase C-terminal domain. The tract at residues 497–621 (ESLTTDNVRR…RGKSSSARAS (125 aa)) is disordered. Residues 503–537 (NVRRDAARTHITQEKGRSVKQIREVSKQRNSRDKP) show a composition bias toward basic and acidic residues. A compositionally biased stretch (low complexity) spans 555–572 (KSSSSSFSKPRKASSPPE).

Belongs to the DEAD box helicase family.

It carries out the reaction ATP + H2O = ADP + phosphate + H(+). This is DEAD-box ATP-dependent RNA helicase 39 (RH39) from Arabidopsis thaliana (Mouse-ear cress).